We begin with the raw amino-acid sequence, 98 residues long: Large ribosomal subunit protein uL23 (98 aa).

This sequence belongs to the universal ribosomal protein uL23 family. In terms of assembly, part of the 50S ribosomal subunit. Contacts protein L29, and trigger factor when it is bound to the ribosome.

Functionally, one of the early assembly proteins it binds 23S rRNA. One of the proteins that surrounds the polypeptide exit tunnel on the outside of the ribosome. Forms the main docking site for trigger factor binding to the ribosome. This Methylorubrum extorquens (strain CM4 / NCIMB 13688) (Methylobacterium extorquens) protein is Large ribosomal subunit protein uL23.